Consider the following 462-residue polypeptide: Argininosuccinate lyase (462 aa).

Belongs to the lyase 1 family. Argininosuccinate lyase subfamily.

Its subcellular location is the cytoplasm. It carries out the reaction 2-(N(omega)-L-arginino)succinate = fumarate + L-arginine. It participates in amino-acid biosynthesis; L-arginine biosynthesis; L-arginine from L-ornithine and carbamoyl phosphate: step 3/3. This Caldicellulosiruptor bescii (strain ATCC BAA-1888 / DSM 6725 / KCTC 15123 / Z-1320) (Anaerocellum thermophilum) protein is Argininosuccinate lyase.